Here is a 528-residue protein sequence, read N- to C-terminus: Ankyrin repeat and death domain-containing protein 1B (528 aa).

ANK repeat units follow at residues 67–96 (PNERSFQNAAKSNNLDLMEKLFEKKVNINV), 100–129 (MNRTALHFAVGRNHLSAVDFLLKHKARVDV), 133–162 (HGLTVIHLAAWSGSLEVMLMLVKAGADQRA), 166–197 (DGMSALHFATQSNHVRIVEYLIQDLHLKDLNQ), 201–230 (KGRKPFLLAAERGHVEMIEKLTFLNLHTSE), 234–263 (GGNTALHLAAKHGHSPAVQVLLAQWQDINE), 267–296 (LNISSLQIATRNGHASLVNFLLSENVDLHQ), 300–329 (PKESPLHLVVINNHITVVNSLLSAQHDIDI), 333–362 (KQQTPLHVAADRGNVELVETLLKAGCDLKA), and 366–395 (QGKTALAVASRSNHSLVVGMLIKAERYYAW). The Death domain occupies 427-515 (TLLWDLAYHQ…KLAEKTRHFK (89 aa)).

This Homo sapiens (Human) protein is Ankyrin repeat and death domain-containing protein 1B (ANKDD1B).